The primary structure comprises 733 residues: MADPRQEFDTMEDHAGDYTLLQDQEGDMDHGLKESPPQPPADDGAEEPGSETSDAKSTPTAEDVTAPLVDERAPDKQAAAQPHTEIPEGITAEEAGIGDTPNQEDQAAGHVTQGRREGQAPDLGTSDWTRQQVSSMSGAPLLPQGLREATCQPSGTRPEDIEKSHPASELLRRGPPQKEGWGQDRLGSEEEVDEDLTVDESSQDSPPSQASLTPGRAAPQAGSGSVCGETASVPGLPTEGSVPLPADFFSKVSAETQASQPEGPGTGPMEEGHEAAPEFTFHVEIKASTPKEQDLEGATVVGVPGEEQKAQTQGPSVGKGTKEASLQEPPGKQPAAGLPGRPVSRVPQLKARVASKDRTGNDEKKAKTSTPSCAKAPSHRPCLSPTRPTLGSSDPLIKPSSPAVSPEPATSPKHVSSVTPRNGSPGTKQMKLKGADGKTGAKIATPRGAASPAQKGTSNATRIPAKTTPSPKTPPGSGEPPKSGERSGYSSPGSPGTPGSRSRTPSLPTPPTREPKKVAVVRTPPKSPSASKSRLQTAPVPMPDLKNVRSKIGSTENLKHQPGGGKVQIINKKLDLSNVQSKCGSKDNIKHVPGGGSVQIVYKPVDLSKVTSKCGSLGNIHHKPGGGQVEVKSEKLDFKDRVQSKIGSLDNITHVPGGGNKKIETHKLTFRENAKAKTDHGAEIVYKSPVVSGDTSPRHLSNVSSTGSIDMVDSPQLATLADEVSASLAKQGL.

Basic and acidic residues predominate over residues 1 to 16 (MADPRQEFDTMEDHAG). The segment at 1 to 548 (MADPRQEFDT…PVPMPDLKNV (548 aa)) is disordered. Alanine 2 carries the N-acetylalanine modification. The residue at position 18 (tyrosine 18) is a Phosphotyrosine; by FYN. Residue lysine 33 forms a Glycyl lysine isopeptide (Lys-Gly) (interchain with G-Cter in ubiquitin) linkage. Serine 35 and serine 50 each carry phosphoserine. Positions 50 to 60 (SETSDAKSTPT) are enriched in polar residues. 3 positions are modified to phosphothreonine: threonine 58, threonine 60, and threonine 100. Omega-N-methylarginine is present on arginine 115. A compositionally biased stretch (polar residues) spans 126–137 (SDWTRQQVSSMS). Positions 157 to 172 (RPEDIEKSHPASELLR) are enriched in basic and acidic residues. Phosphoserine is present on serine 188. The span at 189-202 (EEEVDEDLTVDESS) shows a compositional bias: acidic residues. Residues 203-212 (QDSPPSQASL) show a composition bias toward polar residues. Basic and acidic residues-rich tracts occupy residues 270–294 (EEGH…KEQD) and 354–366 (ASKD…EKKA). The span at 413 to 427 (KHVSSVTPRNGSPGT) shows a compositional bias: polar residues. The residue at position 445 (threonine 445) is a Phosphothreonine. Arginine 447 bears the Omega-N-methylarginine mark. At serine 451 the chain carries Phosphoserine. N6,N6-dimethyllysine; alternate is present on lysine 455. Lysine 455 carries the post-translational modification N6-acetyllysine; alternate. Phosphothreonine occurs at positions 461, 467, and 468. Serine 470 is modified (phosphoserine). Threonine 473 carries the phosphothreonine modification. A phosphoserine mark is found at serine 477, serine 483, and serine 487. The span at 479–506 (EPPKSGERSGYSSPGSPGTPGSRSRTPS) shows a compositional bias: low complexity. The residue at position 489 (tyrosine 489) is a Phosphotyrosine. Residues serine 490, serine 491, and serine 494 each carry the phosphoserine modification. 2 positions are modified to phosphothreonine: threonine 497 and threonine 504. Serine 506 carries the post-translational modification Phosphoserine. The residue at position 509 (threonine 509) is a Phosphothreonine. An N6-acetyllysine modification is found at lysine 517. Threonine 523 carries the post-translational modification Phosphothreonine. A phosphoserine mark is found at serine 527, serine 529, and serine 531. 4 Tau/MAP repeats span residues 536–566 (QTAP…GGGK), 567–597 (VQII…GGGS), 598–628 (VQIV…GGGQ), and 629–660 (VEVK…GGGN). Lysine 546 is covalently cross-linked (Glycyl lysine isopeptide (Lys-Gly) (interchain with G-Cter in ubiquitin)). The residue at position 551 (lysine 551) is an N6-acetyllysine; alternate. Position 551 is an N6-methyllysine; alternate (lysine 551). Lysine 551 participates in a covalent cross-link: Glycyl lysine isopeptide (Lys-Gly) (interchain with G-Cter in ubiquitin); alternate. Phosphoserine; by MARK1, BRSK1, BRSK2 and PHK is present on serine 554. Residue lysine 559 forms a Glycyl lysine isopeptide (Lys-Gly) (interchain with G-Cter in ubiquitin) linkage. Lysine 573 is modified (N6-acetyllysine; alternate). A Glycyl lysine isopeptide (Lys-Gly) (interchain with G-Cter in ubiquitin); alternate cross-link involves residue lysine 573. Serine 577 and serine 581 each carry phosphoserine. Lysine 582 is subject to N6-acetyllysine. Cysteine 583 and cysteine 614 form a disulfide bridge. A Phosphoserine modification is found at serine 585. Residue lysine 590 is modified to N6-acetyllysine; alternate. Lysine 590 participates in a covalent cross-link: Glycyl lysine isopeptide (Lys-Gly) (interchain with G-Cter in ubiquitin); alternate. Phosphoserine is present on serine 597. Lysine 603 carries the post-translational modification N6,N6-dimethyllysine; alternate. N6-acetyllysine; alternate occurs at positions 603, 609, and 613. Residues lysine 603, lysine 609, and lysine 613 each participate in a glycyl lysine isopeptide (Lys-Gly) (interchain with G-Cter in ubiquitin); alternate cross-link. Serine 616 bears the Phosphoserine mark. An N6-acetyllysine; alternate mark is found at lysine 623, lysine 635, and lysine 639. Glycyl lysine isopeptide (Lys-Gly) (interchain with G-Cter in ubiquitin); alternate cross-links involve residues lysine 623, lysine 635, and lysine 639. Omega-N-methylarginine is present on arginine 641. Serine 644 carries the phosphoserine modification. Residue lysine 645 forms a Glycyl lysine isopeptide (Lys-Gly) (interchain with G-Cter in ubiquitin) linkage. The residue at position 648 (serine 648) is a Phosphoserine. At lysine 661 the chain carries N6-acetyllysine; alternate. Lysine 661 participates in a covalent cross-link: Glycyl lysine isopeptide (Lys-Gly) (interchain with G-Cter in ubiquitin); alternate. Residue lysine 667 forms a Glycyl lysine isopeptide (Lys-Gly) (interchain with G-Cter in ubiquitin) linkage. Lysine 677 is modified (N6-acetyllysine; alternate). Lysine 677 participates in a covalent cross-link: Glycyl lysine isopeptide (Lys-Gly) (interchain with G-Cter in ubiquitin); alternate. At tyrosine 686 the chain carries Phosphotyrosine. Serine 688 carries the post-translational modification Phosphoserine. Positions 690-709 (VVSGDTSPRHLSNVSSTGSI) are disordered. Serine 692 carries the phosphoserine; alternate modification. An O-linked (GlcNAc...) serine; alternate glycan is attached at serine 692. Positions 693–708 (GDTSPRHLSNVSSTGS) are enriched in polar residues. A Phosphothreonine modification is found at threonine 695. Residues serine 696, serine 701, serine 708, and serine 714 each carry the phosphoserine modification. Threonine 719 is subject to Phosphothreonine.

In terms of assembly, interacts with MARK1, MARK2, MARK3 and MARK4. Interacts with SQSTM1 when polyubiquitinated. Interacts with PSMC2 through SQSTM1. Interacts with FKBP4. Binds to CSNK1D. Interacts with SGK1. Interacts with EPM2A; the interaction dephosphorylates MAPT at Ser-369. Interacts with PIN1. Interacts with LRRK2. Interacts with LRP1, leading to endocytosis; this interaction is reduced in the presence of LRPAP1/RAP. Post-translationally, polyubiquitinated. Requires functional TRAF6 and may provoke SQSTM1-dependent degradation by the proteasome. Phosphorylation at various serine and threonine residues in S-P or T-P motifs by proline-directed protein kinases (PDPK1, CDK1, CDK5, GSK3, MAPK) (a few sites per protein in interphase, more in mitosis), and at serine residues in K-X-G-S motifs by MAP/microtubule affinity-regulating kinase (MARK1, MARK2, MARK3, MARK4), causing detachment from microtubules, and their disassembly. Phosphorylated by PHK. Dephosphorylation at several serine and threonine residues by the serine/threonine phosphatase PPP5C. Phosphorylation at Ser-554 by BRSK1 and BRSK2 in neurons affects ability to bind microtubules and plays a role in neuron polarization. Phosphorylation at Ser-188 by SGK1 mediates microtubule depolymerization and neurite formation in hippocampal neurons. In terms of tissue distribution, expressed in neurons and at a lower level in the liver and kidney. Isoform PNS-tau is expressed in the peripheral nervous system while the others are expressed in the central nervous system.

The protein resides in the cytoplasm. The protein localises to the cytosol. It is found in the cell membrane. It localises to the cytoskeleton. Its subcellular location is the cell projection. The protein resides in the axon. The protein localises to the dendrite. It is found in the secreted. In terms of biological role, promotes microtubule assembly and stability, and might be involved in the establishment and maintenance of neuronal polarity. The C-terminus binds axonal microtubules while the N-terminus binds neural plasma membrane components, suggesting that tau functions as a linker protein between both. Axonal polarity is predetermined by tau localization (in the neuronal cell) in the domain of the cell body defined by the centrosome. The short isoforms allow plasticity of the cytoskeleton whereas the longer isoforms may preferentially play a role in its stabilization. The sequence is that of Microtubule-associated protein tau from Mus musculus (Mouse).